The sequence spans 279 residues: Sarcosine/dimethylglycine N-methyltransferase (279 aa).

It belongs to the methyltransferase superfamily. In terms of assembly, monomer.

The catalysed reaction is sarcosine + 2 S-adenosyl-L-methionine = glycine betaine + 2 S-adenosyl-L-homocysteine + 2 H(+). The enzyme catalyses sarcosine + S-adenosyl-L-methionine = N,N-dimethylglycine + S-adenosyl-L-homocysteine + H(+). It catalyses the reaction N,N-dimethylglycine + S-adenosyl-L-methionine = glycine betaine + S-adenosyl-L-homocysteine + H(+). It functions in the pathway amine and polyamine biosynthesis; betaine biosynthesis via glycine pathway; betaine from glycine: step 2/3. It participates in amine and polyamine biosynthesis; betaine biosynthesis via glycine pathway; betaine from glycine: step 3/3. Its activity is regulated as follows. p-chloromercuribenzoate acid inhibits 23% of the SDMT activities on sarcosine and dimethylglycine, and S-adenosylhomocysteine (AdoHcy) inhibits completely GSMT activities. Functionally, catalyzes the methylation of sarcosine and dimethylglycine to dimethylglycine and betaine, respectively, with S-adenosylmethionine (AdoMet) acting as the methyl donor. It has strict specificity for sarcosine and dimethylglycine as the methyl group acceptors. The polypeptide is Sarcosine/dimethylglycine N-methyltransferase (Halorhodospira halochloris (Ectothiorhodospira halochloris)).